Here is a 457-residue protein sequence, read N- to C-terminus: F-box/LRR-repeat protein At3g62440 (457 aa).

The F-box domain maps to 1-49 (MDRISNLPDEIICHIGSFLSAREAAFTTVLSKRWHNLFTIVPDLHFDSS). LRR repeat units lie at residues 53–79 (GESL…SLKW), 147–174 (LSLG…SLYH), 177–202 (FYEF…TVCG), 229–254 (WDAF…YYSD), 283–310 (WGKG…NLYT), and 337–362 (LSNF…NIDG).

The sequence is that of F-box/LRR-repeat protein At3g62440 from Arabidopsis thaliana (Mouse-ear cress).